The following is a 330-amino-acid chain: 5'-AMP-activated protein kinase subunit gamma-1 (330 aa).

Positions Met-1–Pro-12 are enriched in low complexity. The segment at Met-1 to Ser-25 is disordered. CBS domains lie at Pro-42 to Leu-102, Ser-124 to Glu-186, and Ile-197 to Val-259. ADP is bound by residues Arg-69, Met-84–Asp-89, Val-129, His-150–Arg-151, and Lys-169. Residues Arg-69, Met-84–Asp-89, Val-129, His-150, His-150–Arg-151, Lys-169, Thr-199, Ala-204, Ser-225–Ala-226, and Ser-241–Asp-244 contribute to the AMP site. Residues Arg-69, Met-84–Asp-89, Val-129, His-150–Arg-151, Arg-151, and Lys-169 contribute to the ATP site. Positions Leu-137–Glu-158 match the AMPK pseudosubstrate motif. Ser-241 to Asp-244 is a binding site for ADP. Position 241–244 (Ser-241–Asp-244) interacts with ATP. At Ser-260 the chain carries Phosphoserine; by ULK1. Thr-262 is subject to Phosphothreonine; by ULK1. Arg-268 provides a ligand contact to ADP. AMP is bound at residue Arg-268. ATP is bound at residue Arg-268. The residue at position 269 (Ser-269) is a Phosphoserine; by ULK1. One can recognise a CBS 4 domain in the interval Tyr-271 to Lys-328. ADP-binding positions include Leu-276 and His-297–Arg-298. Residues Leu-276, His-297, His-297–Arg-298, and Ser-313–Asp-316 each bind AMP. ATP is bound by residues Leu-276 and His-297–Arg-298.

This sequence belongs to the 5'-AMP-activated protein kinase gamma subunit family. AMPK is a heterotrimer of an alpha catalytic subunit (PRKAA1 or PRKAA2), a beta (PRKAB1 or PRKAB2) and a gamma non-catalytic subunits (PRKAG1, PRKAG2 or PRKAG3). Interacts with FNIP1 and FNIP2. Post-translationally, phosphorylated by ULK1 and ULK2; leading to negatively regulate AMPK activity and suggesting the existence of a regulatory feedback loop between ULK1, ULK2 and AMPK. There is some ambiguity for a phosphosite: Ser-260/Thr-262. Glycosylated; O-GlcNAcylated by OGT, promoting the AMP-activated protein kinase (AMPK) activity. In terms of tissue distribution, highly expressed in heart and brain, also found in kidney, white adipose tissue, lung and spleen.

Functionally, AMP/ATP-binding subunit of AMP-activated protein kinase (AMPK), an energy sensor protein kinase that plays a key role in regulating cellular energy metabolism. In response to reduction of intracellular ATP levels, AMPK activates energy-producing pathways and inhibits energy-consuming processes: inhibits protein, carbohydrate and lipid biosynthesis, as well as cell growth and proliferation. AMPK acts via direct phosphorylation of metabolic enzymes, and by longer-term effects via phosphorylation of transcription regulators. Also acts as a regulator of cellular polarity by remodeling the actin cytoskeleton; probably by indirectly activating myosin. Gamma non-catalytic subunit mediates binding to AMP, ADP and ATP, leading to activate or inhibit AMPK: AMP-binding results in allosteric activation of alpha catalytic subunit (PRKAA1 or PRKAA2) both by inducing phosphorylation and preventing dephosphorylation of catalytic subunits. ADP also stimulates phosphorylation, without stimulating already phosphorylated catalytic subunit. ATP promotes dephosphorylation of catalytic subunit, rendering the AMPK enzyme inactive. In Rattus norvegicus (Rat), this protein is 5'-AMP-activated protein kinase subunit gamma-1 (Prkag1).